The following is a 357-amino-acid chain: Probable 3'(2'),5'-bisphosphate nucleotidase 3 (357 aa).

The active-site Proton acceptor is the Asp46. Mg(2+)-binding residues include Glu71, Asp135, and Ile137. Thr140 (proton acceptor) is an active-site residue. Adenosine 3',5'-bisphosphate contacts are provided by Thr140, Ser256, Lys259, and Arg273. AMP is bound by residues Ser256, Lys259, and Arg273.

The protein belongs to the inositol monophosphatase superfamily. The cofactor is Mg(2+).

The catalysed reaction is 3'-phosphoadenylyl sulfate + H2O = adenosine 5'-phosphosulfate + phosphate. It carries out the reaction adenosine 3',5'-bisphosphate + H2O = AMP + phosphate. It catalyses the reaction adenosine 2',5'-bisphosphate + H2O = AMP + phosphate. The enzyme catalyses 1D-myo-inositol 1,4-bisphosphate + H2O = 1D-myo-inositol 4-phosphate + phosphate. The catalysed reaction is 1D-myo-inositol 1,3,4-trisphosphate + H2O = 1D-myo-inositol 3,4-bisphosphate + phosphate. It functions in the pathway signal transduction; phosphatidylinositol signaling pathway. Its function is as follows. Phosphatase that converts adenosine 3'-phosphate 5'-phosphosulfate (PAPS) to adenosine 5'-phosphosulfate (APS) and 3'(2')-phosphoadenosine 5'-phosphate (PAP) to AMP. Is also able to hydrolyze inositol 1,4-bisphosphate and inositol 1,3,4-trisphosphate. The sequence is that of Probable 3'(2'),5'-bisphosphate nucleotidase 3 (SAL3) from Arabidopsis thaliana (Mouse-ear cress).